A 624-amino-acid polypeptide reads, in one-letter code: Actin-related protein 8 (624 aa).

Residue Met1 is modified to N-acetylmethionine. Residues 1–25 (MTQAEKGDTENGKEKGGEKEKEQRG) show a composition bias toward basic and acidic residues. The tract at residues 1–29 (MTQAEKGDTENGKEKGGEKEKEQRGVKRP) is disordered. 2 residues coordinate ATP: Ser55 and Thr56. Ser132 carries the phosphoserine modification. Residue 283–286 (DVGD) participates in ATP binding. The residue at position 412 (Ser412) is a Phosphoserine. The disordered stretch occupies residues 430-462 (SKQEQSAKATADRKSASKPIGFEGDLRGQSSDL).

This sequence belongs to the actin family. ARP8 subfamily. Component of the chromatin remodeling INO80 complex; specifically part of a complex module associated with the DBINO domain of INO80. Exists as monomers and dimers, but the dimer is most probably the biologically relevant form required for stable interactions with histones that exploits the twofold symmetry of the nucleosome core.

It is found in the nucleus. It localises to the chromosome. In terms of biological role, plays an important role in the functional organization of mitotic chromosomes. Exhibits low basal ATPase activity, and unable to polymerize. Proposed core component of the chromatin remodeling INO80 complex which is involved in transcriptional regulation, DNA replication and probably DNA repair. Required for the recruitment of INO80 (and probably the INO80 complex) to sites of DNA damage Strongly prefer nucleosomes and H3-H4 tetramers over H2A-H2B dimers, suggesting it may act as a nucleosome recognition module within the complex. The sequence is that of Actin-related protein 8 (ACTR8) from Pongo abelii (Sumatran orangutan).